Consider the following 331-residue polypeptide: Ketol-acid reductoisomerase (NADP(+)) (331 aa).

One can recognise a KARI N-terminal Rossmann domain in the interval 2-181 (TKVYYEDAVK…GATRAGVIET (180 aa)). Residues 25-28 (YGSQ), arginine 48, serine 52, and 82-85 (DETQ) each bind NADP(+). The active site involves histidine 107. Residue glycine 133 participates in NADP(+) binding. The 146-residue stretch at 182-327 (TFKEETETDL…AELREMMPFV (146 aa)) folds into the KARI C-terminal knotted domain. 4 residues coordinate Mg(2+): aspartate 190, glutamate 194, glutamate 226, and glutamate 230. Serine 251 serves as a coordination point for substrate.

The protein belongs to the ketol-acid reductoisomerase family. Mg(2+) serves as cofactor.

The catalysed reaction is (2R)-2,3-dihydroxy-3-methylbutanoate + NADP(+) = (2S)-2-acetolactate + NADPH + H(+). The enzyme catalyses (2R,3R)-2,3-dihydroxy-3-methylpentanoate + NADP(+) = (S)-2-ethyl-2-hydroxy-3-oxobutanoate + NADPH + H(+). The protein operates within amino-acid biosynthesis; L-isoleucine biosynthesis; L-isoleucine from 2-oxobutanoate: step 2/4. It participates in amino-acid biosynthesis; L-valine biosynthesis; L-valine from pyruvate: step 2/4. In terms of biological role, involved in the biosynthesis of branched-chain amino acids (BCAA). Catalyzes an alkyl-migration followed by a ketol-acid reduction of (S)-2-acetolactate (S2AL) to yield (R)-2,3-dihydroxy-isovalerate. In the isomerase reaction, S2AL is rearranged via a Mg-dependent methyl migration to produce 3-hydroxy-3-methyl-2-ketobutyrate (HMKB). In the reductase reaction, this 2-ketoacid undergoes a metal-dependent reduction by NADPH to yield (R)-2,3-dihydroxy-isovalerate. The chain is Ketol-acid reductoisomerase (NADP(+)) from Listeria innocua serovar 6a (strain ATCC BAA-680 / CLIP 11262).